The chain runs to 254 residues: 5-oxoprolinase subunit A (254 aa).

It belongs to the LamB/PxpA family. In terms of assembly, forms a complex composed of PxpA, PxpB and PxpC.

The enzyme catalyses 5-oxo-L-proline + ATP + 2 H2O = L-glutamate + ADP + phosphate + H(+). Catalyzes the cleavage of 5-oxoproline to form L-glutamate coupled to the hydrolysis of ATP to ADP and inorganic phosphate. The protein is 5-oxoprolinase subunit A of Gluconobacter oxydans (strain 621H) (Gluconobacter suboxydans).